We begin with the raw amino-acid sequence, 211 residues long: Mitotic spindle assembly checkpoint protein MAD2B (211 aa).

Residues 13 to 203 (QVVADILCEF…SDILKMQLYV (191 aa)) enclose the HORMA domain.

As to quaternary structure, homooligomer. Interacts with rev1. Interacts with rev3l. Interacts with fzr1 (in complex with the anaphase promoting complex APC). May interact with cdc20.

Its subcellular location is the nucleus. It is found in the cytoplasm. It localises to the cytoskeleton. The protein resides in the spindle. Its function is as follows. Adapter protein able to interact with different proteins and involved in different biological processes. Mediates the interaction between the error-prone DNA polymerase zeta catalytic subunit rev3l and the inserter polymerase rev1, thereby mediating the second polymerase switching in translesion DNA synthesis. Translesion DNA synthesis releases the replication blockade of replicative polymerases, stalled in presence of DNA lesions. May also play a role in signal transduction in response to DNA damage. May regulate the activation of the anaphase promoting complex APC thereby regulating progression through the cell cycle. Through transcriptional regulation may play a role in epithelial-mesenchymal transdifferentiation. In terms of biological role, inhibits the fzr1-APC complex activity during mitosis. Plays a role in progression of mitosis. This Xenopus laevis (African clawed frog) protein is Mitotic spindle assembly checkpoint protein MAD2B (mad2l2).